A 201-amino-acid chain; its full sequence is Ribonuclease HII (201 aa).

One can recognise an RNase H type-2 domain in the interval 14–201 (NLIAGVDEVG…KPVKRILGIE (188 aa)). Residues aspartate 20, glutamate 21, and aspartate 112 each coordinate a divalent metal cation.

The protein belongs to the RNase HII family. Mn(2+) is required as a cofactor. It depends on Mg(2+) as a cofactor.

It is found in the cytoplasm. The enzyme catalyses Endonucleolytic cleavage to 5'-phosphomonoester.. In terms of biological role, endonuclease that specifically degrades the RNA of RNA-DNA hybrids. The sequence is that of Ribonuclease HII from Photobacterium profundum (strain SS9).